Consider the following 307-residue polypeptide: Acetyl-coenzyme A carboxylase carboxyl transferase subunit beta (307 aa).

A CoA carboxyltransferase N-terminal domain is found at 28-297 (LWVKCPDTGQ…TPEPGTAPEP (270 aa)). The disordered stretch occupies residues 286–307 (RRTPEPGTAPEPTTPEPLPNAA). Residues 292–307 (GTAPEPTTPEPLPNAA) show a composition bias toward pro residues.

This sequence belongs to the AccD/PCCB family. In terms of assembly, acetyl-CoA carboxylase is a heterohexamer composed of biotin carboxyl carrier protein (AccB), biotin carboxylase (AccC) and two subunits each of ACCase subunit alpha (AccA) and ACCase subunit beta (AccD).

It is found in the cytoplasm. The enzyme catalyses N(6)-carboxybiotinyl-L-lysyl-[protein] + acetyl-CoA = N(6)-biotinyl-L-lysyl-[protein] + malonyl-CoA. The protein operates within lipid metabolism; malonyl-CoA biosynthesis; malonyl-CoA from acetyl-CoA: step 1/1. In terms of biological role, component of the acetyl coenzyme A carboxylase (ACC) complex. Biotin carboxylase (BC) catalyzes the carboxylation of biotin on its carrier protein (BCCP) and then the CO(2) group is transferred by the transcarboxylase to acetyl-CoA to form malonyl-CoA. The polypeptide is Acetyl-coenzyme A carboxylase carboxyl transferase subunit beta (Methylorubrum extorquens (strain ATCC 14718 / DSM 1338 / JCM 2805 / NCIMB 9133 / AM1) (Methylobacterium extorquens)).